The sequence spans 261 residues: Mite allergen Der p 3 (261 aa).

The signal sequence occupies residues Met-1–Ala-18. The propeptide occupies Asn-19–Thr-29. The Peptidase S1 domain maps to Ile-30–Ser-260. A disulfide bridge links Cys-54 with Cys-70. Catalysis depends on charge relay system residues His-69 and Asp-114. 2 disulfide bridges follow: Cys-181-Cys-198 and Cys-210-Cys-236. Ser-214 functions as the Charge relay system in the catalytic mechanism.

It belongs to the peptidase S1 family.

It is found in the secreted. This Dermatophagoides pteronyssinus (European house dust mite) protein is Mite allergen Der p 3 (DERP3).